The sequence spans 259 residues: UPF0246 protein NMA1114 (259 aa).

It belongs to the UPF0246 family.

The protein is UPF0246 protein NMA1114 of Neisseria meningitidis serogroup A / serotype 4A (strain DSM 15465 / Z2491).